Reading from the N-terminus, the 742-residue chain is Zinc finger protein 280C (742 aa).

Residues lysine 10, lysine 23, lysine 42, lysine 65, lysine 85, lysine 123, and lysine 135 each participate in a glycyl lysine isopeptide (Lys-Gly) (interchain with G-Cter in SUMO2) cross-link. A compositionally biased stretch (polar residues) spans 138–168 (FTKTSPQEDSGACSVSQSDSTQDIPSSNILQ). The segment at 138–243 (FTKTSPQEDS…QSAPGSSSLR (106 aa)) is disordered. Glycyl lysine isopeptide (Lys-Gly) (interchain with G-Cter in SUMO2) cross-links involve residues lysine 180, lysine 186, and lysine 193. The segment covering 182–191 (PSTSKVNSVN) has biased composition (polar residues). Low complexity predominate over residues 200–222 (SISETRPCSSSSSQTAPSGASSQ). A compositionally biased stretch (polar residues) spans 223–243 (TVLSNVNTSSVQSAPGSSSLR). 5 C2H2-type zinc fingers span residues 323 to 345 (FKCF…MKHH), 360 to 383 (TTCQ…ESTH), 390 to 413 (TICK…KDTH), 420 to 443 (YICQ…RSSH), and 477 to 499 (YRCP…KLEH). Over residues 523–578 (LGSSQSRASSPPSSTIPSTSLQLSVPKSKSTTTKNNSKVSANKATTTSPQTVATTT) the composition is skewed to low complexity. Positions 523–608 (LGSSQSRASS…YKQKRQRTRK (86 aa)) are disordered. The segment covering 579–592 (GKPSASKPGTGTTK) has biased composition (polar residues). Lysine 580 participates in a covalent cross-link: Glycyl lysine isopeptide (Lys-Gly) (interchain with G-Cter in SUMO2). Residues 593–608 (SKAKPSYKQKRQRTRK) show a composition bias toward basic residues.

It localises to the nucleus. Functionally, may function as a transcription factor. The protein is Zinc finger protein 280C (Znf280c) of Mus musculus (Mouse).